We begin with the raw amino-acid sequence, 122 residues long: Large ribosomal subunit protein uL18 (122 aa).

This sequence belongs to the universal ribosomal protein uL18 family. Part of the 50S ribosomal subunit; part of the 5S rRNA/L5/L18/L25 subcomplex. Contacts the 5S and 23S rRNAs.

Functionally, this is one of the proteins that bind and probably mediate the attachment of the 5S RNA into the large ribosomal subunit, where it forms part of the central protuberance. The chain is Large ribosomal subunit protein uL18 from Hydrogenobaculum sp. (strain Y04AAS1).